Here is a 202-residue protein sequence, read N- to C-terminus: Urease accessory protein UreE (202 aa).

Residues 171 to 188 (HHGHSHSHDHDHDHDHQH) are compositionally biased toward basic and acidic residues. Residues 171 to 202 (HHGHSHSHDHDHDHDHQHGPGCTHGHRGHDHH) are disordered.

It belongs to the UreE family.

The protein resides in the cytoplasm. In terms of biological role, involved in urease metallocenter assembly. Binds nickel. Probably functions as a nickel donor during metallocenter assembly. This chain is Urease accessory protein UreE, found in Burkholderia ambifaria (strain ATCC BAA-244 / DSM 16087 / CCUG 44356 / LMG 19182 / AMMD) (Burkholderia cepacia (strain AMMD)).